The following is a 426-amino-acid chain: Ammonium transporter Rh type A (426 aa).

Residues 1–4 are Cytoplasmic-facing; the sequence is MRFK. The chain crosses the membrane as a helical span at residues 5–25; sequence FPLMAIGLEVVMIVLFALFVQ. The Extracellular portion of the chain corresponds to 26-54; sequence YETSVNTSRNPNETESAAMDVEKTMESYP. Asn-31 and Asn-37 each carry an N-linked (GlcNAc...) asparagine glycan. Residues 55-75 form a helical membrane-spanning segment; it reads FFQDVHIMVFAGFGFLMTFLW. Residues 76-78 are Cytoplasmic-facing; that stretch reads KYG. The helical transmembrane segment at 79–99 threads the bilayer; that stretch reads FSGVGINLLIAALGLQWGTII. Residues 100-124 lie on the Extracellular side of the membrane; it reads QGIFRSHGQKFLIEMKNMIHADFST. 2 consecutive transmembrane segments (helical) span residues 125–145 and 146–166; these read VTVL…QMLI and MTIL…KILW. Residues 167-170 lie on the Extracellular side of the membrane; it reads ASDT. The chain crosses the membrane as a helical span at residues 171–191; sequence GESMTIHAFGAYFGLAVAGIL. Over 192–210 the chain is Cytoplasmic; it reads YRSGLKEKHSNEESVYHSD. A helical membrane pass occupies residues 211 to 231; the sequence is LFAMIGSLFLWIFWPSFNSAT. Over 232–241 the chain is Extracellular; that stretch reads ADEAKKQYRA. A helical transmembrane segment spans residues 242 to 262; the sequence is IVNTYFSLAASVVTAYACSSL. Topologically, residues 263–270 are cytoplasmic; that stretch reads LESRGKLN. Residues 271–288 form a helical membrane-spanning segment; that stretch reads MVHIQNATLAGGVAVGTC. Residues 289 to 292 are Extracellular-facing; that stretch reads ADME. Residues 293-313 traverse the membrane as a helical segment; that stretch reads IPPYYAMIIGSIAGAVSVFGF. At 314–331 the chain is on the cytoplasmic side; that stretch reads KFLTPLFTTKLRIHDTCG. The helical transmembrane segment at 332-352 threads the bilayer; sequence VHNLHGLPGVIGGLAGIITVA. The Extracellular segment spans residues 353–371; it reads LEESDSTKTVSQAAALGSS. Residues 372–392 traverse the membrane as a helical segment; it reads IATALVGGLITGAILKIPFWA. Residues 393–426 lie on the Cytoplasmic side of the membrane; that stretch reads QPPDEDCYDDSVYWEVPERKEYDNHFHELLSTLH.

Belongs to the ammonium transporter (TC 2.A.49) family. Rh subfamily. Homodimer. Heterotrimer; a RHCE monomer interacts with a RHAG homodimer. Component of the ankyrin-1 complex in the erythrocyte, composed of ANK1, RHCE, RHAG, SLC4A1, EPB42, GYPA, GYPB and AQP1. Interacts with GYPB (via the N-terminal); this interaction bridges the (RHAG)2(RHCE) heterotrimer with the SLC4A1 Band 3 I dimer complexed with GYPA. In terms of processing, glycosylated.

The protein localises to the membrane. It catalyses the reaction methylamine(out) = methylamine(in). The catalysed reaction is NH4(+)(in) = NH4(+)(out). The enzyme catalyses CO2(out) = CO2(in). Functionally, component of the ankyrin-1 complex, a multiprotein complex involved in the stability and shape of the erythrocyte membrane. Heterotrimer with RHCE (RHAG)2(RHCE), that transports ammonium and its related derivative methylammonium, in both neutral and ionic forms, across the erythrocyte membrane. The transport of NH4(+) is electrogenic and masks the NH3 transport. Also, may act as a CO2 channel. Moreover in erythrocyte, regulates RHD membrane expression and is associated with rhesus blood group antigen expression. The chain is Ammonium transporter Rh type A from Bos taurus (Bovine).